A 230-amino-acid chain; its full sequence is 5'-methylthioadenosine/S-adenosylhomocysteine nucleosidase (230 aa).

Catalysis depends on Glu12, which acts as the Proton acceptor. Residues Gly78, Val152, and 173 to 174 (ME) contribute to the substrate site. Asp197 functions as the Proton donor in the catalytic mechanism.

It belongs to the PNP/UDP phosphorylase family. MtnN subfamily.

The catalysed reaction is S-adenosyl-L-homocysteine + H2O = S-(5-deoxy-D-ribos-5-yl)-L-homocysteine + adenine. It carries out the reaction S-methyl-5'-thioadenosine + H2O = 5-(methylsulfanyl)-D-ribose + adenine. It catalyses the reaction 5'-deoxyadenosine + H2O = 5-deoxy-D-ribose + adenine. Its pathway is amino-acid biosynthesis; L-methionine biosynthesis via salvage pathway; S-methyl-5-thio-alpha-D-ribose 1-phosphate from S-methyl-5'-thioadenosine (hydrolase route): step 1/2. Catalyzes the irreversible cleavage of the glycosidic bond in both 5'-methylthioadenosine (MTA) and S-adenosylhomocysteine (SAH/AdoHcy) to adenine and the corresponding thioribose, 5'-methylthioribose and S-ribosylhomocysteine, respectively. Also cleaves 5'-deoxyadenosine, a toxic by-product of radical S-adenosylmethionine (SAM) enzymes, into 5-deoxyribose and adenine. The sequence is that of 5'-methylthioadenosine/S-adenosylhomocysteine nucleosidase from Glaesserella parasuis serovar 5 (strain SH0165) (Haemophilus parasuis).